The primary structure comprises 1481 residues: Cystic fibrosis transmembrane conductance regulator (1481 aa).

The Cytoplasmic segment spans residues 1-77 (MQRSPLEKAS…KLINALRRCF (77 aa)). The chain crosses the membrane as a helical span at residues 78–98 (FWRFMFYGIILYLGEVTKAVQ). The ABC transmembrane type-1 1 domain maps to 81-365 (FMFYGIILYL…WAVQTWYDSL (285 aa)). The Extracellular portion of the chain corresponds to 99 to 122 (PLLLGRIIASYDPDNKVERSIAIY). A helical transmembrane segment spans residues 123 to 146 (LGIGLCLLFIVRTLLLHPAIFGLH). At 147-195 (HIGMQMRIAMFSLIYKKTLKLSSRVLDKISIGQLVSLLSNNLNKFDEGL) the chain is on the cytoplasmic side. A helical membrane pass occupies residues 196–216 (ALAHFVWIAPLQVTLLMGLLW). Topologically, residues 217–222 (ELLQAF) are extracellular. A helical transmembrane segment spans residues 223 to 243 (TFCGLAFLVVLAFLQAGLGKM). At 244-298 (MMKYRDQRAGKINERLVITSEIIENIQSVKAYCWEEAMEKIIENLRQTELKLTRK) the chain is on the cytoplasmic side. A helical membrane pass occupies residues 299–319 (AAYVRYLNSSAFFFSGFFVVF). At 320–339 (LSVLPYALLKGIILRKIFTT) the chain is on the extracellular side. The helical transmembrane segment at 340 to 358 (ISFCIVLRMAVTRQFPWAV) threads the bilayer. Topologically, residues 359–858 (QTWYDSLGAI…YLRYITVHKS (500 aa)) are cytoplasmic. ATP-binding positions include Trp401, 457–464 (GSTGAGKT), and Gln492. One can recognise an ABC transporter 1 domain in the interval 423–645 (NGDNNLFFSN…RPDFSSKLMG (223 aa)). Cys523 carries S-palmitoyl cysteine lipidation. Phosphoserine is present on residues Ser548 and Ser659. A disordered R region region spans residues 653-831 (TAERRNSIIT…EEINEEDLRD (179 aa)). A Phosphoserine; by PKA modification is found at Ser669. Ser685 carries the phosphoserine modification. Lys687 is covalently cross-linked (Glycyl lysine isopeptide (Lys-Gly) (interchain with G-Cter in ubiquitin)). Phosphoserine is present on residues Ser699 and Ser711. Thr716 is subject to Phosphothreonine. Residues Ser736, Ser767, Ser790, Ser795, and Ser813 each carry the phosphoserine modification. A helical membrane pass occupies residues 859–879 (LMFVLIWCLVVFLAEVAASLV). Positions 859–1155 (LMFVLIWCLV…AVNSSIDVDS (297 aa)) constitute an ABC transmembrane type-1 2 domain. At 880 to 918 (VLCLFPKILFQDKGNSTKSANNSYAVIITSTSSYYIFYI) the chain is on the extracellular side. 2 N-linked (GlcNAc...) asparagine glycosylation sites follow: Asn894 and Asn900. Residues 919–939 (YVGVADTLLALGLFRGLPLVH) traverse the membrane as a discontinuously helical segment. The Cytoplasmic portion of the chain corresponds to 940–990 (TLITVSKTLHHKMLQSVLQAPMSTLNTLKTGGILNRFSKDIAVLDDLLPLT). A helical membrane pass occupies residues 991–1011 (IFDFVQLLLIVIGAVVVVSVL). The Extracellular segment spans residues 1012-1013 (QP). The helical transmembrane segment at 1014-1034 (YIFLATVPVIAAFILLRAYFL) threads the bilayer. Residues 1035–1095 (HTSQQLKQLE…TANWFLYLST (61 aa)) are Cytoplasmic-facing. The chain crosses the membrane as a helical span at residues 1096-1116 (LRWFQMRIEMIFVIFFIAVTF). Residues 1117–1130 (ISILTTGEGEGRVG) are Extracellular-facing. Residues 1131–1151 (IILTLAMNIMGTLQWAVNSSI) form a helical membrane-spanning segment. Over 1152–1481 (DVDSLMRSVS…TEEEVQETKL (330 aa)) the chain is Cytoplasmic. In terms of domain architecture, ABC transporter 2 spans 1211–1444 (MTVKDLTAKY…KSLFRQAISP (234 aa)). ATP contacts are provided by residues Tyr1220 and 1245–1252 (GRTGSGKS). Positions 1387–1481 (RTLKQAFADC…TEEEVQETKL (95 aa)) are interaction with GORASP2. A lipid anchor (S-palmitoyl cysteine) is attached at Cys1396. Residues 1452–1481 (PQRNSSRQKSRSNIAALKEETEEEVQETKL) are disordered. Low complexity predominate over residues 1453 to 1464 (QRNSSRQKSRSN). Ser1457 is modified (phosphoserine). Acidic residues predominate over residues 1471-1481 (ETEEEVQETKL). The PDZ-binding signature appears at 1479 to 1481 (TKL).

The protein belongs to the ABC transporter superfamily. ABCC family. CFTR transporter (TC 3.A.1.202) subfamily. As to quaternary structure, monomer; does not require oligomerization for channel activity. May form oligomers in the membrane. Interacts with SLC26A3, SLC26A6 and NHERF1. Interacts with SHANK2. Interacts with MYO6. Interacts (via C-terminus) with GOPC (via PDZ domain); this promotes CFTR internalization and thereby decreases channel activity. Interacts with SLC4A7 through NHERF1. Found in a complex with MYO5B and RAB11A. Interacts with ANO1. Interacts with SLC26A8. Interacts with AHCYL1; the interaction increases CFTR activity. Interacts with CSE1L. The core-glycosylated form interacts with GORASP2 (via PDZ GRASP-type 1 domain) in respone to ER stress. Interacts with MARCHF2; the interaction leads to CFTR ubiqtuitination and degradation. Interacts with ADGRG2. N-glycosylated. In terms of processing, phosphorylated; cAMP treatment promotes phosphorylation and activates the channel. Dephosphorylation decreases the ATPase activity (in vitro). Phosphorylation at PKA sites activates the channel. Phosphorylation at PKC sites enhances the response to phosphorylation by PKA. Phosphorylated by AMPK; this inhibits channel activity. Post-translationally, ubiquitinated, leading to its degradation in the lysosome. Deubiquitination by USP10 in early endosomes enhances its endocytic recycling to the cell membrane. Ubiquitinated by RNF185 during ER stress. Ubiquitinated by MARCHF2.

The protein resides in the apical cell membrane. Its subcellular location is the early endosome membrane. It is found in the cell membrane. It localises to the recycling endosome membrane. The protein localises to the endoplasmic reticulum membrane. The protein resides in the nucleus. It carries out the reaction ATP + H2O + closed Cl(-) channel = ADP + phosphate + open Cl(-) channel.. The enzyme catalyses chloride(in) = chloride(out). It catalyses the reaction hydrogencarbonate(in) = hydrogencarbonate(out). The catalysed reaction is ATP + H2O = ADP + phosphate + H(+). Functionally, epithelial ion channel that plays an important role in the regulation of epithelial ion and water transport and fluid homeostasis. Mediates the transport of chloride ions across the cell membrane. Possesses an intrinsic ATPase activity and utilizes ATP to gate its channel; the passive flow of anions through the channel is gated by cycles of ATP binding and hydrolysis by the ATP-binding domains. The ion channel is also permeable to HCO(3)(-); selectivity depends on the extracellular chloride concentration. Exerts its function also by modulating the activity of other ion channels and transporters. Contributes to the regulation of the pH and the ion content of the epithelial fluid layer. Modulates the activity of the epithelial sodium channel (ENaC) complex, in part by regulating the cell surface expression of the ENaC complex. May regulate bicarbonate secretion and salvage in epithelial cells by regulating the transporter SLC4A7. Can inhibit the chloride channel activity of ANO1. Plays a role in the chloride and bicarbonate homeostasis during sperm epididymal maturation and capacitation. In Muntiacus muntjak (Barking deer), this protein is Cystic fibrosis transmembrane conductance regulator.